Consider the following 123-residue polypeptide: Sperm-associated antigen 11A (123 aa).

An N-terminal signal peptide occupies residues 1 to 25 (MRQRLLPSVTSLLLVALLFPGSSQA). The N-linked (GlcNAc...) asparagine glycan is linked to Asn29.

Belongs to the SPAG11 family.

It localises to the secreted. Functionally, has antimicrobial activity against E.coli. Plays a role in the defense response in the male reproductive tract, contributing to sperm maturation, storage and protection. This is Sperm-associated antigen 11A from Homo sapiens (Human).